Consider the following 483-residue polypeptide: Glutamate--tRNA ligase (483 aa).

A 'HIGH' region motif is present at residues 11–21 (PSPTGHLHIGN). 4 residues coordinate Zn(2+): C108, C110, C135, and H137. A 'KMSKS' region motif is present at residues 252–256 (KLSKR). K255 lines the ATP pocket.

This sequence belongs to the class-I aminoacyl-tRNA synthetase family. Glutamate--tRNA ligase type 1 subfamily. As to quaternary structure, monomer. The cofactor is Zn(2+).

It is found in the cytoplasm. It catalyses the reaction tRNA(Glu) + L-glutamate + ATP = L-glutamyl-tRNA(Glu) + AMP + diphosphate. Its function is as follows. Catalyzes the attachment of glutamate to tRNA(Glu) in a two-step reaction: glutamate is first activated by ATP to form Glu-AMP and then transferred to the acceptor end of tRNA(Glu). This Bacillus pumilus (strain SAFR-032) protein is Glutamate--tRNA ligase.